The primary structure comprises 344 residues: Ferredoxin--NADP reductase (344 aa).

The FAD site is built by D36, Q44, Y49, V89, F127, D291, and T332.

Belongs to the ferredoxin--NADP reductase type 2 family. Homodimer. FAD is required as a cofactor.

The enzyme catalyses 2 reduced [2Fe-2S]-[ferredoxin] + NADP(+) + H(+) = 2 oxidized [2Fe-2S]-[ferredoxin] + NADPH. The chain is Ferredoxin--NADP reductase from Beijerinckia indica subsp. indica (strain ATCC 9039 / DSM 1715 / NCIMB 8712).